We begin with the raw amino-acid sequence, 984 residues long: MORC family CW-type zinc finger protein 1 (984 aa).

A coiled-coil region spans residues 284–353; the sequence is AFKDEVKKAE…RELKTARTLS (70 aa). Residues 477–531 form a CW-type zinc finger; it reads AMGIPFIIQCDLCLKWRVLPSSTNYQEKEFFDIWICANNPNRLENSCHQVECLPS. Residues C486, C489, C512, and C523 each coordinate Zn(2+). 2 coiled-coil regions span residues 737-761 and 900-934; these read DVSLKQEKKEIPLLNQEKQELCNDV and EISLGQCENKRKISEDKLKNLRIKLALLLQKLQLG.

Its subcellular location is the nucleus. Its function is as follows. Required for spermatogenesis. Essential for de novo DNA methylation and silencing of transposable elements in the male embryonic germ cells. The chain is MORC family CW-type zinc finger protein 1 from Homo sapiens (Human).